The primary structure comprises 665 residues: Translation factor guf1, mitochondrial (665 aa).

The N-terminal 40 residues, 1-40 (MRGCLQLARWLSAAPTRPAASHWPGLCAAPRFFSHSAILR), are a transit peptide targeting the mitochondrion. The 181-residue stretch at 67-247 (ERYRNFCIVA…TVVDKIPAPI (181 aa)) folds into the tr-type G domain. GTP-binding positions include 76–83 (AHVDHGKS), 140–144 (DTPGH), and 194–197 (NKVD).

Belongs to the TRAFAC class translation factor GTPase superfamily. Classic translation factor GTPase family. LepA subfamily.

The protein resides in the mitochondrion inner membrane. The enzyme catalyses GTP + H2O = GDP + phosphate + H(+). Functionally, promotes mitochondrial protein synthesis. May act as a fidelity factor of the translation reaction, by catalyzing a one-codon backward translocation of tRNAs on improperly translocated ribosomes. Binds to mitochondrial ribosomes in a GTP-dependent manner. This Aspergillus terreus (strain NIH 2624 / FGSC A1156) protein is Translation factor guf1, mitochondrial (guf1).